The following is a 147-amino-acid chain: UPF0216 protein MK1676 (147 aa).

Belongs to the UPF0216 family.

The chain is UPF0216 protein MK1676 from Methanopyrus kandleri (strain AV19 / DSM 6324 / JCM 9639 / NBRC 100938).